Consider the following 222-residue polypeptide: Glutathione S-transferase alpha-2 (222 aa).

The GST N-terminal domain occupies 3–83 (GKPVLHYFNA…YIATKYDLYG (81 aa)). Position 4 is an N6-succinyllysine (K4). Residues Y9, K45, 54–55 (QV), and 67–68 (QT) each bind glutathione. A GST C-terminal domain is found at 85-208 (DMKERALIDM…QPGSQRKPAM (124 aa)).

Belongs to the GST superfamily. Alpha family. In terms of assembly, homodimer or heterodimer of GSTA1 and GSTA2.

The protein resides in the cytoplasm. It carries out the reaction RX + glutathione = an S-substituted glutathione + a halide anion + H(+). Its function is as follows. Catalyzes the conjugation of glutathione to a large variety of electrophilic compounds. In Rattus norvegicus (Rat), this protein is Glutathione S-transferase alpha-2 (Gsta2).